The primary structure comprises 243 residues: tRNA (guanine-N(1)-)-methyltransferase (243 aa).

S-adenosyl-L-methionine is bound by residues Gly108 and Leu127 to Leu132.

The protein belongs to the RNA methyltransferase TrmD family. Homodimer.

Its subcellular location is the cytoplasm. The enzyme catalyses guanosine(37) in tRNA + S-adenosyl-L-methionine = N(1)-methylguanosine(37) in tRNA + S-adenosyl-L-homocysteine + H(+). In terms of biological role, specifically methylates guanosine-37 in various tRNAs. The sequence is that of tRNA (guanine-N(1)-)-methyltransferase from Streptococcus gordonii (strain Challis / ATCC 35105 / BCRC 15272 / CH1 / DL1 / V288).